We begin with the raw amino-acid sequence, 175 residues long: Large ribosomal subunit protein uL22y (175 aa).

Residues 153–163 are compositionally biased toward basic and acidic residues; it reads EKEEPVKKEPE. Positions 153–175 are disordered; that stretch reads EKEEPVKKEPETQLAAKSKKSAA.

The protein belongs to the universal ribosomal protein uL22 family.

This Arabidopsis thaliana (Mouse-ear cress) protein is Large ribosomal subunit protein uL22y (RPL17B).